The sequence spans 183 residues: Holliday junction branch migration complex subunit RuvA (183 aa).

Residues 1–63 (MIVGLIGVVE…EDAHLLYGFL (63 aa)) are domain I. The tract at residues 64–141 (EEGEKILFER…IQDETKPMHN (78 aa)) is domain II. A region of interest (flexible linker) is located at residue Asn-141. The tract at residues 141–183 (NEVFLALESLGFKSAEINKVLKTLKPSLSIEAAIKEALQQLRS) is domain III.

The protein belongs to the RuvA family. Homotetramer. Forms an RuvA(8)-RuvB(12)-Holliday junction (HJ) complex. HJ DNA is sandwiched between 2 RuvA tetramers; dsDNA enters through RuvA and exits via RuvB. An RuvB hexamer assembles on each DNA strand where it exits the tetramer. Each RuvB hexamer is contacted by two RuvA subunits (via domain III) on 2 adjacent RuvB subunits; this complex drives branch migration. In the full resolvosome a probable DNA-RuvA(4)-RuvB(12)-RuvC(2) complex forms which resolves the HJ.

It is found in the cytoplasm. The RuvA-RuvB-RuvC complex processes Holliday junction (HJ) DNA during genetic recombination and DNA repair, while the RuvA-RuvB complex plays an important role in the rescue of blocked DNA replication forks via replication fork reversal (RFR). RuvA specifically binds to HJ cruciform DNA, conferring on it an open structure. The RuvB hexamer acts as an ATP-dependent pump, pulling dsDNA into and through the RuvAB complex. HJ branch migration allows RuvC to scan DNA until it finds its consensus sequence, where it cleaves and resolves the cruciform DNA. The protein is Holliday junction branch migration complex subunit RuvA of Helicobacter pylori (strain G27).